The chain runs to 391 residues: Nutrient and stress factor 1 (391 aa).

The segment covering 1–27 (MENTTNRNTAGVLTSSNGNFATNSVAA) has biased composition (polar residues). The disordered stretch occupies residues 1-37 (MENTTNRNTAGVLTSSNGNFATNSVAASTPKRSKSAR). C2H2-type zinc fingers lie at residues 41–66 (FKCT…IRKH) and 72–95 (FQCP…ESVH). The segment at 91–149 (RESVHAHKNHHSTSSHQRKPSSSSLSSSSSASSSSSASSSTSYSDPYRKTNINSGNMPM) is disordered. The span at 96 to 109 (AHKNHHSTSSHQRK) shows a compositional bias: basic residues. Residues 110-134 (PSSSSLSSSSSASSSSSASSSTSYS) show a composition bias toward low complexity. A phosphoserine mark is found at serine 162 and serine 163. Residues 326–374 (AFSQPPNGNKNNNMSSSKNGGKGGENFKNTDDRNDNNNKKRSETLSESD) are disordered. A compositionally biased stretch (low complexity) spans 332 to 344 (NGNKNNNMSSSKN). Residues 353–369 (KNTDDRNDNNNKKRSET) are compositionally biased toward basic and acidic residues.

The protein resides in the nucleus. In terms of biological role, transcription factor that participates in the transcriptional activation of glucose-repressed genes during exponential growth in non-fermentable carbon conditions. Also involved in salt-stress response. The polypeptide is Nutrient and stress factor 1 (USV1) (Saccharomyces cerevisiae (strain ATCC 204508 / S288c) (Baker's yeast)).